Consider the following 178-residue polypeptide: Alkyl hydroperoxide reductase AhpD (178 aa).

Cysteine 131 (proton donor) is an active-site residue. A disulfide bond links cysteine 131 and cysteine 134. The Cysteine sulfenic acid (-SOH) intermediate role is filled by cysteine 134.

Belongs to the AhpD family. In terms of assembly, homotrimer.

The catalysed reaction is N(6)-[(R)-dihydrolipoyl]-L-lysyl-[lipoyl-carrier protein] + a hydroperoxide = N(6)-[(R)-lipoyl]-L-lysyl-[lipoyl-carrier protein] + an alcohol + H2O. In terms of biological role, antioxidant protein with alkyl hydroperoxidase activity. Required for the reduction of the AhpC active site cysteine residues and for the regeneration of the AhpC enzyme activity. This is Alkyl hydroperoxide reductase AhpD from Streptomyces coelicolor (strain ATCC BAA-471 / A3(2) / M145).